The primary structure comprises 130 residues: Small ribosomal subunit protein uS11c (130 aa).

The protein belongs to the universal ribosomal protein uS11 family. In terms of assembly, part of the 30S ribosomal subunit.

It is found in the plastid. The protein localises to the chloroplast. This is Small ribosomal subunit protein uS11c from Oedogonium cardiacum (Filamentous green alga).